The chain runs to 374 residues: Deoxyguanosinetriphosphate triphosphohydrolase-like protein (374 aa).

The region spanning R65–N196 is the HD domain.

Belongs to the dGTPase family. Type 2 subfamily.

The protein is Deoxyguanosinetriphosphate triphosphohydrolase-like protein (dgt) of Nitrosomonas europaea (strain ATCC 19718 / CIP 103999 / KCTC 2705 / NBRC 14298).